The following is a 161-amino-acid chain: E3 ubiquitin ligase complex SCF subunit sconC (161 aa).

An interaction with the F-box domain of F-box proteins region spans residues isoleucine 102–arginine 161.

The protein belongs to the SKP1 family. As to quaternary structure, component of the SCF (SKP1-CUL1-F-box protein) E3 ubiquitin ligase complexes.

It participates in protein modification; protein ubiquitination. In terms of biological role, essential component of the SCF (SKP1-CUL1-F-box protein) E3 ubiquitin ligase complexes, which mediate the ubiquitination and subsequent proteasomal degradation of target proteins. Controls sulfur metabolite repression, probably by mediating the inactivation or degradation of the metR transcription factor. The chain is E3 ubiquitin ligase complex SCF subunit sconC (sconC) from Aspergillus flavus (strain ATCC 200026 / FGSC A1120 / IAM 13836 / NRRL 3357 / JCM 12722 / SRRC 167).